We begin with the raw amino-acid sequence, 477 residues long: Pentatricopeptide repeat-containing protein At4g14170 (477 aa).

PPR repeat units follow at residues 65–96, 97–131, 133–167, 168–198, 199–233, 234–264, 269–299, 300–334, 335–369, and 370–400; these read NVVLSSKLVLAYSKLNHLFPTSLSVFWHMPYR, NIFSWNIIIGEFSRSGFASKSIDLFLRMWRESCVR, DDFTLPLILRACSASREAKSGDLIHVLCLKLGFSS, SLFVSSALVIMYVDMGKLLHARKLFDDMPVR, DSVLYTAMFGGYVQQGEAMLGLAMFREMGYSGFAL, DSVVMVSLLMACGQLGALKHGKSVHGWCIRR, GLNLGNAITDMYVKCSILDYAHTVFVNMSRR, DVISWSSLILGYGLDGDVVMSFKLFDEMLKEGIEP, NAVTFLGVLSACAHGGLVEKSWLYFRLMQEYNIVP, and ELKHYASVADCMSRAGLLEEAEKFLEDMPVK. The interval 405–477 is type E motif; degenerate; it reads VMGAVLSGCK…ISKVPGCSSI (73 aa).

It belongs to the PPR family. PCMP-E subfamily.

This chain is Pentatricopeptide repeat-containing protein At4g14170 (PCMP-E17), found in Arabidopsis thaliana (Mouse-ear cress).